We begin with the raw amino-acid sequence, 472 residues long: Methanethiol oxidase (472 aa).

Ala2 carries the N-acetylalanine modification. The residue at position 467 (Ser467) is a Phosphoserine.

It belongs to the selenium-binding protein family. In terms of assembly, interacts with USP33. Post-translationally, the N-terminus is blocked.

The protein localises to the nucleus. The protein resides in the cytoplasm. It is found in the cytosol. It localises to the membrane. It carries out the reaction methanethiol + O2 + H2O = hydrogen sulfide + formaldehyde + H2O2 + H(+). It functions in the pathway organosulfur degradation. Functionally, catalyzes the oxidation of methanethiol, an organosulfur compound known to be produced in substantial amounts by gut bacteria. Selenium-binding protein which may be involved in the sensing of reactive xenobiotics in the cytoplasm. May be involved in intra-Golgi protein transport. The chain is Methanethiol oxidase (SELENBP1) from Bos taurus (Bovine).